A 316-amino-acid polypeptide reads, in one-letter code: Cell division protein FtsQ (316 aa).

Residues 1–34 are disordered; that stretch reads MAKAARRTKSAPARRSPRRHARQTGATIRRPKRP. Topologically, residues 1 to 61 are cytoplasmic; that stretch reads MAKAARRTKS…HPLLKQMAKR (61 aa). Residues 62-80 form a helical membrane-spanning segment; the sequence is LLLILVIVGFLAGLWAARW. The Periplasmic portion of the chain corresponds to 81–316; that stretch reads PQLLATKTGE…AADPLVSDRI (236 aa). The POTRA domain occupies 97–165; it reads FSVRHVEIVG…DTLVVDIVER (69 aa). The disordered stretch occupies residues 295–316; sequence PEPVKKATKPAKAADPLVSDRI.

The protein belongs to the FtsQ/DivIB family. FtsQ subfamily.

The protein localises to the cell inner membrane. Its function is as follows. Essential cell division protein. The polypeptide is Cell division protein FtsQ (Zymomonas mobilis subsp. mobilis (strain ATCC 31821 / ZM4 / CP4)).